The sequence spans 447 residues: Serine/threonine-protein phosphatase 2A 55 kDa regulatory subunit B delta isoform (447 aa).

WD repeat units follow at residues 26–65 (AEAD…KSRP), 91–132 (EIEE…KRVE), 175–213 (AHTY…RSFN), 224–264 (ELTE…LCDR), 283–321 (EIIS…RPVE), 338–379 (ENDC…DITL), and 414–447 (DFNK…DKVN).

Belongs to the phosphatase 2A regulatory subunit B family. PP2A consists of a common heterodimeric core enzyme, composed of a 36 kDa catalytic subunit (subunit C) and a 65 kDa constant regulatory subunit (PR65 or subunit A), that associates with a variety of regulatory subunits. Proteins that associate with the core dimer include three families of regulatory subunits B (the R2/B/PR55/B55, R3/B''/PR72/PR130/PR59 and R5/B'/B56 families), the 48 kDa variable regulatory subunit, viral proteins, and cell signaling molecules. Interacts with ensa (when phosphorylated at 'Ser-67') and arpp19 (when phosphorylated at 'Ser-67'), leading to inhibit PP2A activity.

It is found in the cytoplasm. Its function is as follows. Substrate-recognition subunit of protein phosphatase 2A (PP2A) that plays a key role in cell cycle by controlling mitosis entry and exit. The activity of PP2A complexes containing ppp2r2d (PR55-delta) fluctuate during the cell cycle: the activity is high in interphase and low in mitosis. During mitosis, activity of PP2A is inhibited via interaction with phosphorylated ensa and arpp19 inhibitors. PP2A complexes containing ppp2r2d (PR55-delta) also regulate the activity of TGF-beta/Activin/Nodal signaling by restricting receptor activity. Within the PP2A complexes, the B regulatory subunits modulate substrate selectivity and catalytic activity, and may also direct the localization of the catalytic enzyme to a particular subcellular compartment. The sequence is that of Serine/threonine-protein phosphatase 2A 55 kDa regulatory subunit B delta isoform (ppp2r2d) from Xenopus tropicalis (Western clawed frog).